A 462-amino-acid polypeptide reads, in one-letter code: UPF0236 protein TTE2489 (462 aa).

This sequence belongs to the UPF0236 family.

This is UPF0236 protein TTE2489 from Caldanaerobacter subterraneus subsp. tengcongensis (strain DSM 15242 / JCM 11007 / NBRC 100824 / MB4) (Thermoanaerobacter tengcongensis).